Reading from the N-terminus, the 528-residue chain is Peptide chain release factor 3 (528 aa).

A tr-type G domain is found at 9-280 (RRRRTFAIIS…LKLAPAPAPR (272 aa)). Residues 18–25 (SHPDAGKT), 86–90 (DTPGH), and 140–143 (NKLD) contribute to the GTP site.

The protein belongs to the TRAFAC class translation factor GTPase superfamily. Classic translation factor GTPase family. PrfC subfamily.

It is found in the cytoplasm. In terms of biological role, increases the formation of ribosomal termination complexes and stimulates activities of RF-1 and RF-2. It binds guanine nucleotides and has strong preference for UGA stop codons. It may interact directly with the ribosome. The stimulation of RF-1 and RF-2 is significantly reduced by GTP and GDP, but not by GMP. The protein is Peptide chain release factor 3 of Symbiobacterium thermophilum (strain DSM 24528 / JCM 14929 / IAM 14863 / T).